We begin with the raw amino-acid sequence, 459 residues long: Vasoactive intestinal polypeptide receptor 1 (459 aa).

Residues 1–30 form the signal peptide; the sequence is MRPPSPPHVRWLCVLAGALACALRPAGSQA. The Extracellular segment spans residues 31–142; that stretch reads ASPQHECEYL…EQQQTKFYNT (112 aa). 5 cysteine pairs are disulfide-bonded: C37-C209, C50-C72, C63-C105, C86-C122, and C216-C286. Residues N58, N69, and N100 are each glycosylated (N-linked (GlcNAc...) asparagine). The helical transmembrane segment at 143–167 threads the bilayer; that stretch reads VKTGYTIGYSLSLASLLVAMAILSL. The Cytoplasmic portion of the chain corresponds to 168–175; it reads FRKLHCTR. A helical transmembrane segment spans residues 176–197; the sequence is NYIHMHLFMSFILRATAVFIKD. At 198 to 217 the chain is on the extracellular side; sequence MALFNSGEIDHCSEASVGCK. A helical transmembrane segment spans residues 218-242; it reads AAVVFFQYCVMANFFWLLVEGLYLY. At 243-255 the chain is on the cytoplasmic side; sequence TLLAVSFFSERKY. Residues 256-277 form a helical membrane-spanning segment; it reads FWGYILIGWGVPSVFITIWTVV. Residues 278–293 lie on the Extracellular side of the membrane; that stretch reads RIYFEDFGCWDTIINS. N-linked (GlcNAc...) asparagine glycosylation is present at N292. The helical transmembrane segment at 294-318 threads the bilayer; it reads SLWWIIKAPILLSILVNFVLFICII. The Cytoplasmic segment spans residues 319-340; the sequence is RILVQKLRPPDIGKNDSSPYSR. The chain crosses the membrane as a helical span at residues 341–361; the sequence is LAKSTLLLIPLFGIHYVMFAF. Residues 362-369 lie on the Extracellular side of the membrane; that stretch reads FPDNFKAQ. A helical membrane pass occupies residues 370–393; it reads VKMVFELVVGSFQGFVVAILYCFL. Topologically, residues 394–459 are cytoplasmic; sequence NGEVQAELRR…SSFQAEVSLV (66 aa).

Belongs to the G-protein coupled receptor 2 family. Interacts with ADCYAP1/PACAP; activated by both PACAP27 and PACAP38 neuropeptides. Interacts with VIP; the interaction results in VIPR1 activation. As to expression, in liver, lung, intestines, thymus and brain (mostly in the cerebral cortex and hippocampus).

The protein localises to the cell membrane. Its function is as follows. G protein-coupled receptor activated by the neuropeptides vasoactive intestinal peptide (VIP) and pituitary adenylate cyclase-activating polypeptide (ADCYAP1/PACAP). Binds VIP and both PACAP27 and PACAP38 bioactive peptides with the following order of ligand affinity VIP = PACAP27 &gt; PACAP38. Ligand binding causes a conformation change that triggers signaling via guanine nucleotide-binding proteins (G proteins) and modulates the activity of downstream effectors. Activates cAMP-dependent pathway. In Rattus norvegicus (Rat), this protein is Vasoactive intestinal polypeptide receptor 1.